A 120-amino-acid polypeptide reads, in one-letter code: MARSMSLKLACVVVLCLLVDAPLAQGAISYDQVKSSLLPCVGYVRGNNARPAPPNYCKGIRSLKSAARIRLDRQAACKCIKSLAADISDINYGVAAGLPGQCNVHIPYKISPSIDCKRVK.

An N-terminal signal peptide occupies residues 1-26 (MARSMSLKLACVVVLCLLVDAPLAQG). 2 disulfides stabilise this stretch: C57-C102 and C77-C116.

It belongs to the plant LTP family. As to expression, specifically expressed in fiber cells.

Functionally, plant non-specific lipid-transfer proteins transfer phospholipids as well as galactolipids across membranes. May play a role in wax or cutin deposition in the cell walls of expanding epidermal cells and certain secretory tissues. The sequence is that of Non-specific lipid-transfer protein 6 (LTP6) from Gossypium hirsutum (Upland cotton).